Here is a 226-residue protein sequence, read N- to C-terminus: Apoptosis regulator OPG045 (226 aa).

It belongs to the orthopoxvirus OPG045 family. In terms of assembly, homodimer. Interacts with host pro-apoptotic protein BCL2L11 (via BH3 domain). Interacts with host NLRP1. Interacts with host BAK.

Its subcellular location is the host mitochondrion outer membrane. It is found in the host cytoplasm. In terms of biological role, plays a role in evading host innate immune response by inhibiting host inflammasome activation. Interacts with and inhibits NLR-mediated interleukin-1 beta/IL1B production in infected cells. At the host mitochondria outer membrane, interacts with the BH3 domain of host BAK and prevents BAK from binding active BAX. In turn, host apoptosis is inhibited. This chain is Apoptosis regulator OPG045 (OPG045), found in Homo sapiens (Human).